The chain runs to 195 residues: Interferon omega-2 (195 aa).

The signal sequence occupies residues methionine 1–glycine 23. 2 cysteine pairs are disulfide-bonded: cysteine 24-cysteine 122 and cysteine 52-cysteine 162. Asparagine 101 is a glycosylation site (N-linked (GlcNAc...) asparagine).

The protein belongs to the alpha/beta interferon family.

The protein resides in the secreted. This chain is Interferon omega-2, found in Equus caballus (Horse).